A 244-amino-acid polypeptide reads, in one-letter code: Phosphoadenosine 5'-phosphosulfate reductase (244 aa).

Catalysis depends on Cys239, which acts as the Nucleophile; cysteine thiosulfonate intermediate.

Belongs to the PAPS reductase family. CysH subfamily.

Its subcellular location is the cytoplasm. The catalysed reaction is [thioredoxin]-disulfide + sulfite + adenosine 3',5'-bisphosphate + 2 H(+) = [thioredoxin]-dithiol + 3'-phosphoadenylyl sulfate. It functions in the pathway sulfur metabolism; hydrogen sulfide biosynthesis; sulfite from sulfate: step 3/3. In terms of biological role, catalyzes the formation of sulfite from phosphoadenosine 5'-phosphosulfate (PAPS) using thioredoxin as an electron donor. The chain is Phosphoadenosine 5'-phosphosulfate reductase from Escherichia coli O81 (strain ED1a).